The primary structure comprises 427 residues: Histidine--tRNA ligase (427 aa).

Belongs to the class-II aminoacyl-tRNA synthetase family. In terms of assembly, homodimer.

The protein resides in the cytoplasm. It carries out the reaction tRNA(His) + L-histidine + ATP = L-histidyl-tRNA(His) + AMP + diphosphate + H(+). This Deinococcus radiodurans (strain ATCC 13939 / DSM 20539 / JCM 16871 / CCUG 27074 / LMG 4051 / NBRC 15346 / NCIMB 9279 / VKM B-1422 / R1) protein is Histidine--tRNA ligase.